Consider the following 966-residue polypeptide: Integrator complex subunit 7 (966 aa).

A phosphoserine mark is found at Ser-338 and Ser-809. The disordered stretch occupies residues 941–966 (LQQQAQQPLQPQPLPQPQPRSAYTRF).

It belongs to the Integrator subunit 7 family. Component of the Integrator complex, composed of core subunits INTS1, INTS2, INTS3, INTS4, INTS5, INTS6, INTS7, INTS8, INTS9/RC74, INTS10, INTS11/CPSF3L, INTS12, INTS13, INTS14 and INTS15. The core complex associates with protein phosphatase 2A subunits PPP2CA and PPP2R1A, to form the Integrator-PP2A (INTAC) complex. Interacts with NABP2.

It localises to the nucleus. The protein localises to the chromosome. It is found in the cytoplasm. Its function is as follows. Component of the integrator complex, a multiprotein complex that terminates RNA polymerase II (Pol II) transcription in the promoter-proximal region of genes. The integrator complex provides a quality checkpoint during transcription elongation by driving premature transcription termination of transcripts that are unfavorably configured for transcriptional elongation: the complex terminates transcription by (1) catalyzing dephosphorylation of the C-terminal domain (CTD) of Pol II subunit POLR2A/RPB1 and SUPT5H/SPT5, (2) degrading the exiting nascent RNA transcript via endonuclease activity and (3) promoting the release of Pol II from bound DNA. The integrator complex is also involved in terminating the synthesis of non-coding Pol II transcripts, such as enhancer RNAs (eRNAs), small nuclear RNAs (snRNAs), telomerase RNAs and long non-coding RNAs (lncRNAs). May be not involved in the recruitment of cytoplasmic dynein to the nuclear envelope by different components of the INT complex. Plays a role in DNA damage response (DDR) signaling during the S phase. This chain is Integrator complex subunit 7 (Ints7), found in Mus musculus (Mouse).